The following is a 354-amino-acid chain: Mating-type protein MAT-1 (354 aa).

The alpha box DNA-binding region spans 60 to 117 (KAKKALNAFVGFRCYYIAIPAFKQWPMKKLSNLISLLWDRDPNKSLWSLMAKAWSNIR).

This sequence belongs to the MATALPHA1 family.

It is found in the nucleus. Functionally, mating type proteins are sequence specific DNA-binding proteins that act as master switches in fungal differentiation by controlling gene expression in a cell type-specific fashion. Transcriptional activator that induces the transcription of alpha-specific genes. In Cochliobolus cymbopogonis (Curvularia cymbopogonis), this protein is Mating-type protein MAT-1 (MAT1).